The primary structure comprises 204 residues: Gellan lyase (204 aa).

Multimer.

The protein localises to the secreted. It carries out the reaction Eliminative cleavage of beta-D-glucopyranosyl-(1-&gt;4)-beta-D-glucopyranosyluronate bonds of gellan backbone releasing tetrasaccharides containing a 4-deoxy-4,5-unsaturated D-glucopyranosyluronic acid at the non-reducing end. The tetrasaccharide produced from deacetylated gellan is beta-D-4-deoxy-Delta(4)-GlcAp-(1-&gt;4)-beta-D-Glcp-(1-&gt;4)-alpha-L-Rhap-(1-&gt;3)-beta-D-Glcp.. With respect to regulation, activity is stimulated by zinc, potassium, lithium, cobalt, sodium, calcium, iron, manganase, magnesium and mercury ions at a concentration of 1 mM, but inhibited by copper ions at a concentration of 1 mM. Activity is inhibited by potassium, sodium and magnesium ions at a concentration of 1 M. Activity is inhibited by urea, EDTA, dithiothreitol, p-CMB, PSF, natrium lauryl sulfate and N-bromosuccinimide. Functionally, cleaves the glycosidic bonds of gellan backbone and releases tetrasaccharide units of glucuronyl-glucosyl-rhamnosyl-glucose with unsaturated glucuronic acid at the non-reducing terminal. The enzyme is highly specific to the heteropolysaccharide gellan. The protein is Gellan lyase of Geobacillus stearothermophilus (Bacillus stearothermophilus).